Reading from the N-terminus, the 205-residue chain is Small ribosomal subunit protein uS4 (205 aa).

A disordered region spans residues 20–47; sequence WGRSKSPLNRGKENPPGQHGQRRKKPSD. Residues 94 to 154 form the S4 RNA-binding domain; sequence CRLDAVVYRL…TKSKDMALIL (61 aa).

Belongs to the universal ribosomal protein uS4 family. Part of the 30S ribosomal subunit. Contacts protein S5. The interaction surface between S4 and S5 is involved in control of translational fidelity.

One of the primary rRNA binding proteins, it binds directly to 16S rRNA where it nucleates assembly of the body of the 30S subunit. Its function is as follows. With S5 and S12 plays an important role in translational accuracy. The chain is Small ribosomal subunit protein uS4 from Paramagnetospirillum magneticum (strain ATCC 700264 / AMB-1) (Magnetospirillum magneticum).